A 134-amino-acid polypeptide reads, in one-letter code: Small ribosomal subunit protein uS11 (134 aa).

It belongs to the universal ribosomal protein uS11 family. As to quaternary structure, part of the 30S ribosomal subunit. Interacts with proteins S7 and S18. Binds to IF-3.

Functionally, located on the platform of the 30S subunit, it bridges several disparate RNA helices of the 16S rRNA. Forms part of the Shine-Dalgarno cleft in the 70S ribosome. The polypeptide is Small ribosomal subunit protein uS11 (Paracidovorax citrulli (strain AAC00-1) (Acidovorax citrulli)).